Here is an 857-residue protein sequence, read N- to C-terminus: Potassium channel AKT1 (857 aa).

Residues 1 to 61 are Cytoplasmic-facing; the sequence is MRGGALLCGQ…PYDHKYRIWE (61 aa). A helical transmembrane segment spans residues 62–82; sequence AFLVVLVVYTAWVSPFEFGFL. Residues 83–90 lie on the Extracellular side of the membrane; it reads RKPRPPLS. A helical transmembrane segment spans residues 91–111; sequence ITDNIVNAFFAIDIIMTFFVG. Residues 112 to 134 lie on the Cytoplasmic side of the membrane; that stretch reads YLDKSTYLIVDDRKQIAFKYLRS. Residues 135 to 155 form a helical membrane-spanning segment; that stretch reads WFLLDLVSTIPSEAAMRISSQ. The Extracellular segment spans residues 156–158; the sequence is SYG. A helical; Voltage-sensor membrane pass occupies residues 159-179; sequence LFNMLRLWRLRRVGALFARLE. Residues 180-193 are Cytoplasmic-facing; the sequence is KDRNFNYFWVRCAK. Residues 194–214 traverse the membrane as a helical segment; it reads LVCVTLFAVHCAACFYYLIAA. Over 215–241 the chain is Extracellular; sequence RNSNPAKTWIGANVANFLEESLWMRYV. Positions 242-261 form an intramembrane region, pore-forming; the sequence is TSMYWSITTLTTVGYGDLHP. The Extracellular portion of the chain corresponds to 262–265; that stretch reads VNTK. Residues 266–286 form a helical membrane-spanning segment; it reads EMIFDIFYMLFNLGLTAYLIG. Residues 287–857 are Cytoplasmic-facing; sequence NMTNLVVHGT…GDHLIFATDS (571 aa). 372-493 serves as a coordination point for a nucleoside 3',5'-cyclic phosphate; that stretch reads LFRGVSNDLL…IMNNLLQHLK (122 aa). 6 ANK repeats span residues 515–546, 550–579, 583–612, 614–643, 647–676, and 680–709; these read KMDL…DPNE, NGRT…DPNC, EGSV…TIDA, DVGH…DVTR, TGTS…DVNK, and HGWT…ERRV. One can recognise a KHA domain in the interval 790–857; that stretch reads RVTISCAEKD…GDHLIFATDS (68 aa).

The protein belongs to the potassium channel family. Plant (TC 1.A.1.4) subfamily. As to quaternary structure, the potassium channel is probably composed of a homo- or heterotetrameric complex of pore-forming subunits. Possible heteromultimer with AKT2 or KAT3. Part of a K(+)-channel calcium-sensing kinase/phosphatase complex composed by a calcium sensor CBL (CBL1, CBL2, CBL3 or CBL9), a kinase CIPK (CIPK6, CIPK16 or CIPK23), a phosphatase PP2C (AIP1) and a K(+)-channel (AKT1). Interacts directly with AIP1, CBL10, CIPK6, CIPK16 and CIPK23. Post-translationally, phosphorylated by CIPK proteins CIPK6, CIPK16 and CIPK23. The activation by phosphorylation is induced by low K(+) conditions and stimulates K(+) uptake and relocation. Dephosphorylation by AIP1 repressed the transport activity. In terms of tissue distribution, preferentially expressed in the peripheral cell layers of root mature including root cortex and root hairs. Detected also, at a lower level, in the mesophyll of the leaves and at restricted sites corresponding to hydathodes and guard cells.

It is found in the cell membrane. Highly selective inward-rectifying potassium channel that mediate potassium uptake by plant roots in response to low K(+) conditions, by a calcium-, CBL-, and CIPK-dependent pathway. Positively regulated by phosphorylation by CIPK23. Negatively regulated by a kinase-independent regulatory mechanism involving a competing direct binding of CBL10. Involved in the stomatal regulation by monitoring the turgor pressure in guard cells. Assuming opened or closed conformations in response to the voltage difference across the membrane, the channel is activated by hyperpolarization. May interact with the cytoskeleton or with regulatory proteins. Is essential with POT5/HAK5 for high-affinity potassium uptake in roots during seedling establishment and postgermination growth under low potassium conditions. The polypeptide is Potassium channel AKT1 (AKT1) (Arabidopsis thaliana (Mouse-ear cress)).